The primary structure comprises 151 residues: uncharacterized protein (151 aa).

4 helical membrane-spanning segments follow: residues G8 to E28, W60 to T80, F82 to S102, and L113 to S133.

Belongs to the DoxX family.

It is found in the cell membrane. This is an uncharacterized protein from Haemophilus influenzae (strain ATCC 51907 / DSM 11121 / KW20 / Rd).